Here is a 399-residue protein sequence, read N- to C-terminus: Dual-specificity RNA methyltransferase RlmN (399 aa).

The active-site Proton acceptor is Glu-120. Residues 126-367 (EEGRGTLCVS…SPVRTPRGRD (242 aa)) enclose the Radical SAM core domain. The cysteines at positions 133 and 372 are disulfide-linked. [4Fe-4S] cluster-binding residues include Cys-140, Cys-144, and Cys-147. S-adenosyl-L-methionine contacts are provided by residues 198–199 (GE), Ser-230, 252–254 (SLH), and Asn-329. Cys-372 acts as the S-methylcysteine intermediate in catalysis.

Belongs to the radical SAM superfamily. RlmN family. [4Fe-4S] cluster is required as a cofactor.

It is found in the cytoplasm. The catalysed reaction is adenosine(2503) in 23S rRNA + 2 reduced [2Fe-2S]-[ferredoxin] + 2 S-adenosyl-L-methionine = 2-methyladenosine(2503) in 23S rRNA + 5'-deoxyadenosine + L-methionine + 2 oxidized [2Fe-2S]-[ferredoxin] + S-adenosyl-L-homocysteine. It carries out the reaction adenosine(37) in tRNA + 2 reduced [2Fe-2S]-[ferredoxin] + 2 S-adenosyl-L-methionine = 2-methyladenosine(37) in tRNA + 5'-deoxyadenosine + L-methionine + 2 oxidized [2Fe-2S]-[ferredoxin] + S-adenosyl-L-homocysteine. Specifically methylates position 2 of adenine 2503 in 23S rRNA and position 2 of adenine 37 in tRNAs. m2A2503 modification seems to play a crucial role in the proofreading step occurring at the peptidyl transferase center and thus would serve to optimize ribosomal fidelity. In Parvibaculum lavamentivorans (strain DS-1 / DSM 13023 / NCIMB 13966), this protein is Dual-specificity RNA methyltransferase RlmN.